We begin with the raw amino-acid sequence, 52 residues long: LIRRPFFSWLAPSRIFDQIFGEHLPESELLPVSPSFSPFLMRSPILRMPSWL.

This sequence belongs to the small heat shock protein (HSP20) family. Homodimer. Aggregates with homologous proteins, including alpha-A-crystallin and the small heat shock protein HSPB1, to form large heteromeric complexes.

Its function is as follows. May contribute to the transparency and refractive index of the lens. The polypeptide is Alpha-crystallin B chain (CRYAB) (Turdus merula (Common blackbird)).